The primary structure comprises 250 residues: MSRHRFNNVQIKALPGGLMAHHEPDADGGQPGSQKLPMWPSERIPPGGAGAFHSAKVQYSKETADLIRLLVKESKMSMLVRKQIDESLRNGEPLPLPEPPRPNTNNDPDKETLAILDRARNAKRKNLRQIEASGAYKQSYYRPPADNRMHGEKAKSQLQFTMAGTHLPDPAIKPRRRPREEQLVTEEDLINELLDQINERAEWLTEMESMGQGKKYRPEIRDQIAERLRRIQALESKMKMKSNGGFRFVD.

A disordered region spans residues 86–110 (ESLRNGEPLPLPEPPRPNTNNDPDK).

It belongs to the UPF0193 (EVG1) family.

This chain is UPF0193 protein EVG1 homolog, found in Drosophila melanogaster (Fruit fly).